We begin with the raw amino-acid sequence, 203 residues long: Holliday junction branch migration complex subunit RuvA (203 aa).

Positions 1–63 (MIDYLRGTLT…EDVIRLYGFR (63 aa)) are domain I. The segment at 64–142 (TKEKRSLFEK…ELHPGLFSQK (79 aa)) is domain II. Positions 143–152 (EEQPKPHEKN) are flexible linker. A domain III region spans residues 153 to 203 (DGNQALDEAMEALKALGYVEKELKKVKPKLEQETLTTDAYIKKALQLMLNR).

This sequence belongs to the RuvA family. In terms of assembly, homotetramer. Forms an RuvA(8)-RuvB(12)-Holliday junction (HJ) complex. HJ DNA is sandwiched between 2 RuvA tetramers; dsDNA enters through RuvA and exits via RuvB. An RuvB hexamer assembles on each DNA strand where it exits the tetramer. Each RuvB hexamer is contacted by two RuvA subunits (via domain III) on 2 adjacent RuvB subunits; this complex drives branch migration. In the full resolvosome a probable DNA-RuvA(4)-RuvB(12)-RuvC(2) complex forms which resolves the HJ.

It is found in the cytoplasm. Functionally, the RuvA-RuvB-RuvC complex processes Holliday junction (HJ) DNA during genetic recombination and DNA repair, while the RuvA-RuvB complex plays an important role in the rescue of blocked DNA replication forks via replication fork reversal (RFR). RuvA specifically binds to HJ cruciform DNA, conferring on it an open structure. The RuvB hexamer acts as an ATP-dependent pump, pulling dsDNA into and through the RuvAB complex. HJ branch migration allows RuvC to scan DNA until it finds its consensus sequence, where it cleaves and resolves the cruciform DNA. This is Holliday junction branch migration complex subunit RuvA from Halalkalibacterium halodurans (strain ATCC BAA-125 / DSM 18197 / FERM 7344 / JCM 9153 / C-125) (Bacillus halodurans).